The following is a 140-amino-acid chain: Dehydratase ustZ (140 aa).

One can recognise an EthD domain in the interval 18-113 (PGISTEDYRN…GPDHEKFADT (96 aa)).

Belongs to the tpcK family.

The enzyme catalyses naphtopyrone YWA1 = norrubrofusarin + H2O + H(+). It participates in secondary metabolite biosynthesis. Its function is as follows. Dehydratase; part of the gene cluster that mediates the biosynthesis of ustilaginoidins, dimeric gamma-naphthopyrones isolated from different fungal species. The first step in the biosynthesis of ustilaginoidins is the production of gamma-naphthopyrone precursor YWA1 by the non-reducing polyketide synthase ustP, via condensation of one acetyl-CoA starter unit with 6 malonyl-CoA units. YWA1 is then probably substrate of the ustZ to yield norrubrofusarin via a dehydration reaction. A key enzyme in the biosynthetic pathway is the laccase ustL, which catalyzes the oxidative dimerization of norrubrofusarin to ustilaginoidin A. It can produce the M- and P-atropisomers in varying amounts, depending on the reaction conditions. For the biosynthesis of 3-methylustilaginoid in derivatives such as chaetochromin A, a methylated derivative of YWA1 is required. The C-methylation is considered to be catalyzed by ustM, the phosphopantetheine attachment site of which indicates that it acts on the growing polyketide chain before release of the product. For the biosynthesis of chaetochromin A, it is assumed that saturation of the D2 double bond takes place before dimerization, and is probably catalyzed by an external reductase because no candidate gene was identified within the cluster. The protein is Dehydratase ustZ of Ustilaginoidea virens (Rice false smut fungus).